The primary structure comprises 121 residues: Large ribosomal subunit protein bL19 (121 aa).

This sequence belongs to the bacterial ribosomal protein bL19 family.

This protein is located at the 30S-50S ribosomal subunit interface and may play a role in the structure and function of the aminoacyl-tRNA binding site. The protein is Large ribosomal subunit protein bL19 of Mesomycoplasma hyopneumoniae (strain 232) (Mycoplasma hyopneumoniae).